A 237-amino-acid polypeptide reads, in one-letter code: Ras-related protein Rab-23 (237 aa).

7 residues coordinate GTP: V20, G21, K22, S23, S24, Y38, and T41. S23 serves as a coordination point for Mg(2+). A Switch 1 motif is present at residues 28 to 46 (RYCKGIFTKDYKKTIGVDF). Mg(2+) is bound by residues T41 and D64. The Switch 2 signature appears at 65–84 (TAGQEEFDAITKAYYRGAQA). GTP contacts are provided by G67, N121, K122, D124, S151, V152, and K153. Phosphoserine is present on residues S186 and S187. Over residues 188–208 (SNKIGVFNTSGGSHSGQNSGT) the composition is skewed to polar residues. Positions 188 to 237 (SNKIGVFNTSGGSHSGQNSGTLNGGDVINLRPNKQRTKKNRNPFSSCSIP) are disordered. At C234 the chain carries Cysteine methyl ester. A lipid anchor (S-geranylgeranyl cysteine) is attached at C234. The propeptide at 235–237 (SIP) is removed in mature form.

It belongs to the small GTPase superfamily. Rab family. Interacts with SUFU. Mg(2+) serves as cofactor.

The protein localises to the cell membrane. Its subcellular location is the cytoplasm. It is found in the cytoplasmic vesicle. The protein resides in the autophagosome. It localises to the endosome membrane. The protein localises to the phagosome. Its subcellular location is the phagosome membrane. It carries out the reaction GTP + H2O = GDP + phosphate + H(+). With respect to regulation, regulated by guanine nucleotide exchange factors (GEFs) which promote the exchange of bound GDP for free GTP. Regulated by GTPase activating proteins (GAPs) which increase the GTP hydrolysis activity. Inhibited by GDP dissociation inhibitors (GDIs). Its function is as follows. The small GTPases Rab are key regulators of intracellular membrane trafficking, from the formation of transport vesicles to their fusion with membranes. Rabs cycle between an inactive GDP-bound form and an active GTP-bound form that is able to recruit to membranes different set of downstream effectors directly responsible for vesicle formation, movement, tethering and fusion. Together with SUFU, prevents nuclear import of GLI1, and thereby inhibits GLI1 transcription factor activity. Regulates GLI1 in differentiating chondrocytes. Likewise, regulates GLI3 proteolytic processing and modulates GLI2 and GLI3 transcription factor activity. Plays a role in autophagic vacuole assembly, and mediates defense against pathogens, such as S.aureus, by promoting their capture by autophagosomes that then merge with lysosomes. The chain is Ras-related protein Rab-23 from Homo sapiens (Human).